Reading from the N-terminus, the 388-residue chain is Succinate--CoA ligase [ADP-forming] subunit beta (388 aa).

ATP-binding positions include K46, 53–55, E99, C102, and E107; that span reads GRG. 2 residues coordinate Mg(2+): N199 and D213. Residues N264 and 321–323 each bind substrate; that span reads GIV.

It belongs to the succinate/malate CoA ligase beta subunit family. Heterotetramer of two alpha and two beta subunits. The cofactor is Mg(2+).

It carries out the reaction succinate + ATP + CoA = succinyl-CoA + ADP + phosphate. The catalysed reaction is GTP + succinate + CoA = succinyl-CoA + GDP + phosphate. Its pathway is carbohydrate metabolism; tricarboxylic acid cycle; succinate from succinyl-CoA (ligase route): step 1/1. Functionally, succinyl-CoA synthetase functions in the citric acid cycle (TCA), coupling the hydrolysis of succinyl-CoA to the synthesis of either ATP or GTP and thus represents the only step of substrate-level phosphorylation in the TCA. The beta subunit provides nucleotide specificity of the enzyme and binds the substrate succinate, while the binding sites for coenzyme A and phosphate are found in the alpha subunit. In Actinobacillus pleuropneumoniae serotype 7 (strain AP76), this protein is Succinate--CoA ligase [ADP-forming] subunit beta.